A 160-amino-acid polypeptide reads, in one-letter code: Myosin catalytic light chain LC-1, mantle muscle (160 aa).

Blocked amino end (Xaa) is present on Xaa-1. EF-hand domains lie at Asp-7–Asn-44, Thr-83–Arg-118, and Ile-119–Gly-153.

In terms of biological role, in molluscan muscle, calcium regulation is associated with myosin rather than with actin. Muscle myosin contains two types of light chains: the catalytic light chain, essential for ATPase activity, and the regulatory light chain, a calcium-binding protein responsible for Ca(2+) dependent binding and Ca(2+) dependent Mg-ATPase activity. The chain is Myosin catalytic light chain LC-1, mantle muscle from Todarodes pacificus (Japanese flying squid).